Here is a 209-residue protein sequence, read N- to C-terminus: Small ribosomal subunit protein uS3 (209 aa).

The KH type-2 domain occupies 38–107 (IRKIIKNKYY…RVVINIEEIK (70 aa)).

It belongs to the universal ribosomal protein uS3 family. Part of the 30S ribosomal subunit. Forms a tight complex with proteins S10 and S14.

Functionally, binds the lower part of the 30S subunit head. Binds mRNA in the 70S ribosome, positioning it for translation. In Thermotoga maritima (strain ATCC 43589 / DSM 3109 / JCM 10099 / NBRC 100826 / MSB8), this protein is Small ribosomal subunit protein uS3.